A 94-amino-acid chain; its full sequence is Non-specific lipid-transfer protein C4 (94 aa).

Residues 1–26 form the signal peptide; that stretch reads MAASKGNAAAAACALVLVLLAVGAEA. Intrachain disulfides connect Cys-34–Cys-72, Cys-44–Cys-59, Cys-60–Cys-85, and Cys-70–Cys-92. Residue Asn-91 is glycosylated (N-linked (GlcNAc...) asparagine).

This sequence belongs to the plant LTP family.

Functionally, lipid-transfer protein that may be regulated by the transcription factor UDT1 in developing anthers and play a role in tapetum development. This Oryza sativa subsp. japonica (Rice) protein is Non-specific lipid-transfer protein C4.